Consider the following 247-residue polypeptide: MPRLLHPALPLLLGATLTFRALRRALCRLPLPVHVRADPLRTWRWHNLLVSFAHSIVSGIWALLCVWQTPDMLVEIETAWSLSGYLLVCFSAGYFIHDTVDIVASGQTRASWEYLVHHVMAMGAFFSGIFWSSFVGGGVLTLLVEVSNIFLTIRMMMKISNAQDHLLYRVNKYVNLVMYFLFRLAPQAYLTHFFLRYVNQRTLGTFLLGILLMLDVMIIIYFSRLLRSDFCPEHVPKKQHKDKFLTE.

An N-terminal signal peptide occupies residues 1 to 35 (MPRLLHPALPLLLGATLTFRALRRALCRLPLPVHV). Residues 36–46 (RADPLRTWRWH) lie on the Extracellular side of the membrane. The region spanning 40-234 (LRTWRWHNLL…LLRSDFCPEH (195 aa)) is the TLC domain. The chain crosses the membrane as a helical span at residues 47–67 (NLLVSFAHSIVSGIWALLCVW). The Cytoplasmic segment spans residues 68 to 83 (QTPDMLVEIETAWSLS). Residues 84-104 (GYLLVCFSAGYFIHDTVDIVA) form a helical membrane-spanning segment. Residues 105-123 (SGQTRASWEYLVHHVMAMG) lie on the Extracellular side of the membrane. The segment at residues 124 to 144 (AFFSGIFWSSFVGGGVLTLLV) is an intramembrane region (helical). Residues 145–173 (EVSNIFLTIRMMMKISNAQDHLLYRVNKY) lie on the Extracellular side of the membrane. Residues 174–194 (VNLVMYFLFRLAPQAYLTHFF) form a helical membrane-spanning segment. At 195–201 (LRYVNQR) the chain is on the cytoplasmic side. Residues 202 to 222 (TLGTFLLGILLMLDVMIIIYF) form a helical membrane-spanning segment. Topologically, residues 223–247 (SRLLRSDFCPEHVPKKQHKDKFLTE) are extracellular.

The protein resides in the cell membrane. Its function is as follows. Regulates the composition and fluidity of the plasma membrane. Inhibits the incorporation of membrane-fluidizing phospholipids containing omega-3 long-chain polyunsaturated fatty acids (LCPUFA) and thereby promotes membrane rigidity. Does not appear to have any effect on LCPUFA synthesis. The sequence is that of TLC domain-containing protein 1 (TLCD1) from Homo sapiens (Human).